The chain runs to 321 residues: Methionine import ATP-binding protein MetN (321 aa).

Residues 2–241 enclose the ABC transporter domain; sequence INAVDLHKVY…PGSLLARSLF (240 aa). Residue 38-45 coordinates ATP; that stretch reads GPSGAGKS.

This sequence belongs to the ABC transporter superfamily. Methionine importer (TC 3.A.1.24) family. In terms of assembly, the complex is composed of two ATP-binding proteins (MetN), two transmembrane proteins (MetI) and a solute-binding protein (MetQ).

It is found in the cell membrane. The catalysed reaction is L-methionine(out) + ATP + H2O = L-methionine(in) + ADP + phosphate + H(+). The enzyme catalyses D-methionine(out) + ATP + H2O = D-methionine(in) + ADP + phosphate + H(+). In terms of biological role, part of the ABC transporter complex MetNIQ involved in methionine import. Responsible for energy coupling to the transport system. The sequence is that of Methionine import ATP-binding protein MetN from Thermobifida fusca (strain YX).